The chain runs to 342 residues: Phenylalanine--tRNA ligase alpha subunit (342 aa).

Position 260 (Glu-260) interacts with Mg(2+).

The protein belongs to the class-II aminoacyl-tRNA synthetase family. Phe-tRNA synthetase alpha subunit type 1 subfamily. In terms of assembly, tetramer of two alpha and two beta subunits. It depends on Mg(2+) as a cofactor.

It is found in the cytoplasm. It carries out the reaction tRNA(Phe) + L-phenylalanine + ATP = L-phenylalanyl-tRNA(Phe) + AMP + diphosphate + H(+). This is Phenylalanine--tRNA ligase alpha subunit from Nocardia farcinica (strain IFM 10152).